The primary structure comprises 198 residues: UPF0548 protein DR_2035 (198 aa).

The protein belongs to the UPF0548 family.

The protein is UPF0548 protein DR_2035 of Deinococcus radiodurans (strain ATCC 13939 / DSM 20539 / JCM 16871 / CCUG 27074 / LMG 4051 / NBRC 15346 / NCIMB 9279 / VKM B-1422 / R1).